Consider the following 360-residue polypeptide: Popeye domain-containing protein 1 (360 aa).

Residues 1–48 are Extracellular-facing; it reads MNYTESSPLRESTAIGFTPELESIIPVPSNKTTCENWREIHHLVFHVA. Residues N2 and N30 are each glycosylated (N-linked (GlcNAc...) asparagine). The chain crosses the membrane as a helical span at residues 49 to 69; that stretch reads NICFAVGLVIPTTLHLHMIFL. A topological domain (cytoplasmic) is located at residue R70. A helical membrane pass occupies residues 71-91; it reads GMLTLGCTLYIVWATLYRCAL. D92 is a topological domain (extracellular). Residues 93–113 form a helical membrane-spanning segment; it reads IMIWNSVFLGVNILHLSYLLY. A required for interaction with CAV3 region spans residues 93 to 115; sequence IMIWNSVFLGVNILHLSYLLYKK. At 114 to 360 the chain is on the cytoplasmic side; sequence KKRPVKIEKE…PNTLKVHQLP (247 aa). A required for interaction with KCNK2 region spans residues 136 to 186; the sequence is RVPPDLFRRLTGQFCMIQTLKKGQTYAAEDKTSVDDRLSILLKGKMKVSYR. S295 and S318 each carry phosphoserine. Positions 317–360 are disordered; the sequence is SSLHVSSPHQRASAKMKPIEEGAEDDDDVFEPASPNTLKVHQLP. A compositionally biased stretch (acidic residues) spans 337–346; sequence EGAEDDDDVF. The span at 350 to 360 shows a compositional bias: polar residues; sequence SPNTLKVHQLP.

The protein belongs to the popeye family. In terms of assembly, homodimer. Homodimerization requires the C-terminus cytoplasmic region. Interacts (via the C-terminus cytoplasmic tail) with TJP1. Interacts (via the C-terminus cytoplasmic tail) with ARHGEF25/GEFT (via the DH domain). Interacts (via the C-terminus cytoplasmic tail) with VAMP3. Interacts with KCNK2; the interaction enhances KCNK2 surface expression and is inhibited by cAMP. Interacts with CAV3. As to expression, expressed in epithelial cells (at protein level). Expressed in fetal and adult heart and skeletal muscle.

It is found in the lateral cell membrane. Its subcellular location is the cell junction. It localises to the tight junction. The protein resides in the membrane. The protein localises to the cell membrane. It is found in the sarcolemma. Its subcellular location is the caveola. Its function is as follows. Cell adhesion molecule involved in the establishment and/or maintenance of cell integrity. Involved in the formation and regulation of the tight junction (TJ) paracellular permeability barrier in epithelial cells. Plays a role in VAMP3-mediated vesicular transport and recycling of different receptor molecules through its interaction with VAMP3. Plays a role in the regulation of cell shape and movement by modulating the Rho-family GTPase activity through its interaction with ARHGEF25/GEFT. Induces primordial adhesive contact and aggregation of epithelial cells in a Ca(2+)-independent manner. Also involved in striated muscle regeneration and repair and in the regulation of cell spreading. Important for the maintenance of cardiac function. Plays a regulatory function in heart rate dynamics mediated, at least in part, through cAMP-binding and, probably, by increasing cell surface expression of the potassium channel KCNK2 and enhancing current density. Is also a caveolae-associated protein important for the preservation of caveolae structural and functional integrity as well as for heart protection against ischemia injury. In Homo sapiens (Human), this protein is Popeye domain-containing protein 1.